The sequence spans 125 residues: Fluoride-specific ion channel FluC (125 aa).

4 consecutive transmembrane segments (helical) span residues 3 to 23, 33 to 53, 65 to 85, and 99 to 119; these read FILI…VSKV, IPLG…FVLF, FVLF…TFAY, and LVYF…GMVL. 2 residues coordinate Na(+): G75 and T78.

The protein belongs to the fluoride channel Fluc/FEX (TC 1.A.43) family.

Its subcellular location is the cell inner membrane. The enzyme catalyses fluoride(in) = fluoride(out). Its activity is regulated as follows. Na(+) is not transported, but it plays an essential structural role and its presence is essential for fluoride channel function. In terms of biological role, fluoride-specific ion channel. Important for reducing fluoride concentration in the cell, thus reducing its toxicity. In Thermosipho melanesiensis (strain DSM 12029 / CIP 104789 / BI429), this protein is Fluoride-specific ion channel FluC.